The primary structure comprises 855 residues: Potassium channel AKT2 (855 aa).

The segment covering 1–12 (MKTSSFESASSS) has biased composition (low complexity). Residues 1–24 (MKTSSFESASSSGGSGGGGGGGGG) form a disordered region. The Cytoplasmic portion of the chain corresponds to 1 to 75 (MKTSSFESAS…PLDSRYRCWD (75 aa)). Residues 13-24 (GGSGGGGGGGGG) are compositionally biased toward gly residues. The helical transmembrane segment at 76–96 (TFMVVLVAYSAWVYPFEVAFM) threads the bilayer. Topologically, residues 97-105 (NASPKGGLE) are extracellular. Residues 106 to 126 (VADIVVDLFFAVDIVLTFFVA) form a helical membrane-spanning segment. Topologically, residues 127–149 (YIDSRTQLLVRDRRRIATRYLST) are cytoplasmic. A helical membrane pass occupies residues 150–170 (FFIMDVASTIPFQGLAYIVTG). Residues 171–179 (EVRESPAFS) are Extracellular-facing. Residues 180 to 200 (LLGILRLWRLRKVKQFFTRLE) form a helical; Voltage-sensor membrane-spanning segment. The Cytoplasmic segment spans residues 201–214 (KDIRFNYFWIRCAR). Residues 215–235 (LIAVTLFLVHCAGCLYYLIAD) traverse the membrane as a helical segment. Topologically, residues 236–262 (RYPHREKTWIGAVIPDFQEASLWIRYT) are extracellular. Positions 263-282 (SSVYWSITTMTTVGYGDMHA) form an intramembrane region, pore-forming. Topologically, residues 283 to 285 (QNT) are extracellular. The chain crosses the membrane as a helical span at residues 286–306 (VEMIFNIFYMLFNLGLTAYLI). Residues 307-855 (GNMTNLVVEG…VASMDSVSGS (549 aa)) lie on the Cytoplasmic side of the membrane. 391–511 (LFKGVSREVL…VVIIKNFLKH (121 aa)) lines the a nucleoside 3',5'-cyclic phosphate pocket. ANK repeat units follow at residues 536–565 (NIPC…DPDV), 569–598 (KGRT…NVNI), 602–631 (QGNT…VSSP), 634–663 (AAGD…AVDS), and 667–696 (DGAT…SVDR). Residues 744 to 765 (EVGSSGDSRNGRRQSARSDGAH) are disordered. The KHA domain occupies 768–855 (RVSIYRGHPF…VASMDSVSGS (88 aa)).

This sequence belongs to the potassium channel family. Plant (TC 1.A.1.4) subfamily. The potassium channel is probably a homo- or heterotetrameric complex of pore-forming subunits.

The protein localises to the membrane. In terms of biological role, probable inward-rectifying potassium channel. Assuming opened or closed conformations in response to the voltage difference across the membrane, the channel is activated by hyperpolarization. This chain is Potassium channel AKT2, found in Oryza sativa subsp. japonica (Rice).